We begin with the raw amino-acid sequence, 211 residues long: MKKGLMISFEGPDGAGKTTVLEAVLPLLREKLSQDILTTREPGGVTISEEIRHIILDVKHTQMDKKTELLLYMAARRQHLVEKVLPALEEGKIVLMDRFIDSSVAYQGSGRGLDKSHIKWLNDYATDSHKPDLTLYFDVPSEVGLERIQKSVQREVNRLDLEQLDMHQRVRQGYLELADSEPNRIVTIDASQQLDEVIAETFSIILDRINQ.

11 to 18 contributes to the ATP binding site; the sequence is GPDGAGKT.

It belongs to the thymidylate kinase family.

The enzyme catalyses dTMP + ATP = dTDP + ADP. Phosphorylation of dTMP to form dTDP in both de novo and salvage pathways of dTTP synthesis. This is Thymidylate kinase from Streptococcus agalactiae serotype Ia (strain ATCC 27591 / A909 / CDC SS700).